Here is a 221-residue protein sequence, read N- to C-terminus: GTP cyclohydrolase 1 (221 aa).

The Zn(2+) site is built by C109, H112, and C180.

This sequence belongs to the GTP cyclohydrolase I family. In terms of assembly, toroid-shaped homodecamer, composed of two pentamers of five dimers.

It catalyses the reaction GTP + H2O = 7,8-dihydroneopterin 3'-triphosphate + formate + H(+). The protein operates within cofactor biosynthesis; 7,8-dihydroneopterin triphosphate biosynthesis; 7,8-dihydroneopterin triphosphate from GTP: step 1/1. The protein is GTP cyclohydrolase 1 of Blochmanniella pennsylvanica (strain BPEN).